Reading from the N-terminus, the 158-residue chain is 2-C-methyl-D-erythritol 2,4-cyclodiphosphate synthase (158 aa).

2 residues coordinate a divalent metal cation: Asp9 and His11. Residues 9–11 (DVH) and 35–36 (HS) each bind 4-CDP-2-C-methyl-D-erythritol 2-phosphate. His43 contacts a divalent metal cation. 4-CDP-2-C-methyl-D-erythritol 2-phosphate is bound by residues 57–59 (DLG), 62–66 (FPDTD), 133–136 (TTTE), Phe140, and Arg143.

Belongs to the IspF family. Homotrimer. A divalent metal cation serves as cofactor.

It catalyses the reaction 4-CDP-2-C-methyl-D-erythritol 2-phosphate = 2-C-methyl-D-erythritol 2,4-cyclic diphosphate + CMP. It functions in the pathway isoprenoid biosynthesis; isopentenyl diphosphate biosynthesis via DXP pathway; isopentenyl diphosphate from 1-deoxy-D-xylulose 5-phosphate: step 4/6. Its function is as follows. Involved in the biosynthesis of isopentenyl diphosphate (IPP) and dimethylallyl diphosphate (DMAPP), two major building blocks of isoprenoid compounds. Catalyzes the conversion of 4-diphosphocytidyl-2-C-methyl-D-erythritol 2-phosphate (CDP-ME2P) to 2-C-methyl-D-erythritol 2,4-cyclodiphosphate (ME-CPP) with a corresponding release of cytidine 5-monophosphate (CMP). The sequence is that of 2-C-methyl-D-erythritol 2,4-cyclodiphosphate synthase from Desulfitobacterium hafniense (strain DSM 10664 / DCB-2).